A 307-amino-acid polypeptide reads, in one-letter code: tRNA pseudouridine synthase B (307 aa).

Residue aspartate 41 is the Nucleophile of the active site.

The protein belongs to the pseudouridine synthase TruB family. Type 1 subfamily.

The enzyme catalyses uridine(55) in tRNA = pseudouridine(55) in tRNA. Its function is as follows. Responsible for synthesis of pseudouridine from uracil-55 in the psi GC loop of transfer RNAs. In Prochlorococcus marinus (strain MIT 9312), this protein is tRNA pseudouridine synthase B.